The following is a 241-amino-acid chain: Methylthioribulose-1-phosphate dehydratase (241 aa).

The interval 1–20 (MSAIKDERNNDHLVQSHDPE) is disordered. Cysteine 100 contributes to the substrate binding site. Zn(2+)-binding residues include histidine 117 and histidine 119. Glutamate 146 acts as the Proton donor/acceptor in catalysis. Histidine 202 serves as a coordination point for Zn(2+).

Belongs to the aldolase class II family. MtnB subfamily. Requires Zn(2+) as cofactor.

The protein resides in the cytoplasm. The catalysed reaction is 5-(methylsulfanyl)-D-ribulose 1-phosphate = 5-methylsulfanyl-2,3-dioxopentyl phosphate + H2O. Its pathway is amino-acid biosynthesis; L-methionine biosynthesis via salvage pathway; L-methionine from S-methyl-5-thio-alpha-D-ribose 1-phosphate: step 2/6. Its function is as follows. Catalyzes the dehydration of methylthioribulose-1-phosphate (MTRu-1-P) into 2,3-diketo-5-methylthiopentyl-1-phosphate (DK-MTP-1-P). The protein is Methylthioribulose-1-phosphate dehydratase of Blastomyces gilchristii (strain SLH14081) (Blastomyces dermatitidis).